A 182-amino-acid polypeptide reads, in one-letter code: NADH-quinone oxidoreductase subunit I (182 aa).

4Fe-4S ferredoxin-type domains follow at residues 52–82 (LTRDPDGEERCVACNLCAVACPVGCISLQKA) and 92–121 (EFFRINFSRCIFCGLCEEACPTTAIQLTPD). [4Fe-4S] cluster is bound by residues C62, C65, C68, C72, C101, C104, C107, and C111.

Belongs to the complex I 23 kDa subunit family. As to quaternary structure, NDH-1 is composed of 13 different subunits. Subunits NuoA, H, J, K, L, M, N constitute the membrane sector of the complex. It depends on [4Fe-4S] cluster as a cofactor.

The protein resides in the cell inner membrane. It catalyses the reaction a quinone + NADH + 5 H(+)(in) = a quinol + NAD(+) + 4 H(+)(out). NDH-1 shuttles electrons from NADH, via FMN and iron-sulfur (Fe-S) centers, to quinones in the respiratory chain. The immediate electron acceptor for the enzyme in this species is believed to be ubiquinone. Couples the redox reaction to proton translocation (for every two electrons transferred, four hydrogen ions are translocated across the cytoplasmic membrane), and thus conserves the redox energy in a proton gradient. This chain is NADH-quinone oxidoreductase subunit I, found in Pseudomonas putida (strain ATCC 47054 / DSM 6125 / CFBP 8728 / NCIMB 11950 / KT2440).